We begin with the raw amino-acid sequence, 191 residues long: Small ribosomal subunit protein uS5 (191 aa).

Positions phenylalanine 20 to valine 83 constitute an S5 DRBM domain. Positions threonine 158–alanine 191 are disordered. Over residues lysine 170 to glutamate 180 the composition is skewed to basic and acidic residues. The span at alanine 182 to alanine 191 shows a compositional bias: low complexity.

This sequence belongs to the universal ribosomal protein uS5 family. In terms of assembly, part of the 30S ribosomal subunit. Contacts proteins S4 and S8.

With S4 and S12 plays an important role in translational accuracy. Functionally, located at the back of the 30S subunit body where it stabilizes the conformation of the head with respect to the body. The sequence is that of Small ribosomal subunit protein uS5 from Dinoroseobacter shibae (strain DSM 16493 / NCIMB 14021 / DFL 12).